The chain runs to 776 residues: Meiotic expression up-regulated protein 1/2 (776 aa).

Coiled-coil stretches lie at residues 87–122 (YVLKVAEEKIEKLLKENGTLKNEEKCLRMQIVAQEE), 173–227 (FSEL…DLKE), 265–307 (YKVE…NDEE), 362–430 (KMSQ…RNNS), and 496–595 (INNQ…NTEL).

The sequence is that of Meiotic expression up-regulated protein 1/2 (meu1) from Schizosaccharomyces pombe (strain 972 / ATCC 24843) (Fission yeast).